Reading from the N-terminus, the 130-residue chain is MPNNYRLAKVSSLLKKEITLILQNELEIDLISDHFVNISKIDLSGDLQHCKIYITSTAQEKVKKEIVSNLNTAKSSIRHSLGKRIEMRRVPEIIFKDDVVLDKGLSVLKLLDELKNKNQNHNVEDEDAKS.

Belongs to the RbfA family. As to quaternary structure, monomer. Binds 30S ribosomal subunits, but not 50S ribosomal subunits or 70S ribosomes.

The protein resides in the cytoplasm. Functionally, one of several proteins that assist in the late maturation steps of the functional core of the 30S ribosomal subunit. Associates with free 30S ribosomal subunits (but not with 30S subunits that are part of 70S ribosomes or polysomes). Required for efficient processing of 16S rRNA. May interact with the 5'-terminal helix region of 16S rRNA. The chain is Ribosome-binding factor A from Prochlorococcus marinus (strain MIT 9215).